The chain runs to 299 residues: tRNA dimethylallyltransferase (299 aa).

13 to 20 (GPTASGKT) lines the ATP pocket. 15–20 (TASGKT) serves as a coordination point for substrate. Residues 38–41 (DSRQ) are interaction with substrate tRNA.

This sequence belongs to the IPP transferase family. As to quaternary structure, monomer. The cofactor is Mg(2+).

The catalysed reaction is adenosine(37) in tRNA + dimethylallyl diphosphate = N(6)-dimethylallyladenosine(37) in tRNA + diphosphate. In terms of biological role, catalyzes the transfer of a dimethylallyl group onto the adenine at position 37 in tRNAs that read codons beginning with uridine, leading to the formation of N6-(dimethylallyl)adenosine (i(6)A). This is tRNA dimethylallyltransferase from Prochlorococcus marinus (strain NATL2A).